Reading from the N-terminus, the 172-residue chain is uncharacterized protein (172 aa).

Residues 12-172 enclose the N-acetyltransferase domain; that stretch reads IRLRCMEDRD…IAVYERKSYN (161 aa).

This is an uncharacterized protein from Bacillus subtilis (strain 168).